A 346-amino-acid chain; its full sequence is PhoH-like protein (346 aa).

Residue 142-149 participates in ATP binding; the sequence is GPAGTGKT.

It belongs to the PhoH family.

It is found in the cytoplasm. In Escherichia coli O157:H7, this protein is PhoH-like protein (ybeZ).